A 320-amino-acid polypeptide reads, in one-letter code: Thiamine thiazole synthase (320 aa).

Residues Cys-82, 103-104 (EA), Gly-111, and Val-176 each bind substrate. 2,3-didehydroalanine (Cys) is present on Cys-209. Substrate-binding positions include Asp-211, His-226, Met-278, and 288–290 (RMG).

The protein belongs to the THI4 family. Homooctamer. Fe cation serves as cofactor. During the catalytic reaction, a sulfide is transferred from Cys-209 to a reaction intermediate, generating a dehydroalanine residue.

It is found in the cytoplasm. The protein resides in the nucleus. The catalysed reaction is [ADP-thiazole synthase]-L-cysteine + glycine + NAD(+) = [ADP-thiazole synthase]-dehydroalanine + ADP-5-ethyl-4-methylthiazole-2-carboxylate + nicotinamide + 3 H2O + 2 H(+). Its function is as follows. Involved in biosynthesis of the thiamine precursor thiazole. Catalyzes the conversion of NAD and glycine to adenosine diphosphate 5-(2-hydroxyethyl)-4-methylthiazole-2-carboxylic acid (ADT), an adenylated thiazole intermediate. The reaction includes an iron-dependent sulfide transfer from a conserved cysteine residue of the protein to a thiazole intermediate. The enzyme can only undergo a single turnover, which suggests it is a suicide enzyme. May have additional roles in adaptation to various stress conditions and in DNA damage tolerance. This Fusarium oxysporum f. sp. lycopersici (strain 4287 / CBS 123668 / FGSC 9935 / NRRL 34936) (Fusarium vascular wilt of tomato) protein is Thiamine thiazole synthase (sti35).